The sequence spans 198 residues: Ribosome maturation factor RimP (198 aa).

The protein belongs to the RimP family.

It localises to the cytoplasm. Its function is as follows. Required for maturation of 30S ribosomal subunits. The polypeptide is Ribosome maturation factor RimP (Agrobacterium fabrum (strain C58 / ATCC 33970) (Agrobacterium tumefaciens (strain C58))).